Consider the following 1131-residue polypeptide: Major DNA-binding protein (1131 aa).

The Required for filament formation signature appears at 790 to 791 (FW). A required for nuclear localization region spans residues 1112–1131 (LKCEETEHENEEPSLKKARL).

Belongs to the herpesviridae major DNA-binding protein family. As to quaternary structure, homooligomers. Forms double-helical filaments necessary for the formation of replication compartments within the host nucleus. Interacts with the origin-binding protein. Interacts with the helicase primase complex; this interaction stimulates primer synthesis activity of the helicase-primase complex. Interacts with the DNA polymerase. Interacts with the alkaline exonuclease; this interaction increases its nuclease processivity.

The protein resides in the host nucleus. Functionally, single-stranded DNA-binding protein required for DNA replication. In terms of biological role, plays several crucial roles in viral infection. Participates in the opening of the viral DNA origin to initiate replication by interacting with the origin-binding protein. May disrupt loops, hairpins and other secondary structures present on ssDNA to reduce and eliminate pausing of viral DNA polymerase at specific sites during elongation. Promotes viral DNA recombination by performing strand-transfer, characterized by the ability to transfer a DNA strand from a linear duplex to a complementary single-stranded DNA circle. Can also catalyze the renaturation of complementary single strands. Additionally, reorganizes the host cell nucleus, leading to the formation of prereplicative sites and replication compartments. This process is driven by the protein which can form double-helical filaments in the absence of DNA. The protein is Major DNA-binding protein of Human herpesvirus 7 (strain JI) (HHV-7).